The following is a 130-amino-acid chain: MSMQDPIADMLTRIRNGQAANKVAISMPSSKLKVAIANVLAEEGYIESVKVLDGVKPELEITLKYFQGKPVVESIQRVSRPGLRIYKRKDELPKVMGGLGVAVVSTSKGVMTDRAARQAGLGGEIICYVA.

This sequence belongs to the universal ribosomal protein uS8 family. Part of the 30S ribosomal subunit. Contacts proteins S5 and S12.

Its function is as follows. One of the primary rRNA binding proteins, it binds directly to 16S rRNA central domain where it helps coordinate assembly of the platform of the 30S subunit. This Pasteurella multocida (strain Pm70) protein is Small ribosomal subunit protein uS8.